We begin with the raw amino-acid sequence, 135 residues long: Ribosome-binding factor A (135 aa).

This sequence belongs to the RbfA family. Monomer. Binds 30S ribosomal subunits, but not 50S ribosomal subunits or 70S ribosomes.

The protein resides in the cytoplasm. Functionally, one of several proteins that assist in the late maturation steps of the functional core of the 30S ribosomal subunit. Associates with free 30S ribosomal subunits (but not with 30S subunits that are part of 70S ribosomes or polysomes). Required for efficient processing of 16S rRNA. May interact with the 5'-terminal helix region of 16S rRNA. This chain is Ribosome-binding factor A, found in Methylobacterium nodulans (strain LMG 21967 / CNCM I-2342 / ORS 2060).